A 199-amino-acid chain; its full sequence is Imidazole glycerol phosphate synthase subunit HisH (199 aa).

The Glutamine amidotransferase type-1 domain maps to 3–199 (NITIIDTGCA…LKNFVEKVPF (197 aa)). Cys-78 acts as the Nucleophile in catalysis. Residues His-178 and Glu-180 contribute to the active site.

In terms of assembly, heterodimer of HisH and HisF.

The protein resides in the cytoplasm. It carries out the reaction 5-[(5-phospho-1-deoxy-D-ribulos-1-ylimino)methylamino]-1-(5-phospho-beta-D-ribosyl)imidazole-4-carboxamide + L-glutamine = D-erythro-1-(imidazol-4-yl)glycerol 3-phosphate + 5-amino-1-(5-phospho-beta-D-ribosyl)imidazole-4-carboxamide + L-glutamate + H(+). The catalysed reaction is L-glutamine + H2O = L-glutamate + NH4(+). It participates in amino-acid biosynthesis; L-histidine biosynthesis; L-histidine from 5-phospho-alpha-D-ribose 1-diphosphate: step 5/9. In terms of biological role, IGPS catalyzes the conversion of PRFAR and glutamine to IGP, AICAR and glutamate. The HisH subunit catalyzes the hydrolysis of glutamine to glutamate and ammonia as part of the synthesis of IGP and AICAR. The resulting ammonia molecule is channeled to the active site of HisF. This chain is Imidazole glycerol phosphate synthase subunit HisH, found in Haemophilus influenzae (strain 86-028NP).